Consider the following 448-residue polypeptide: Exodeoxyribonuclease 7 large subunit (448 aa).

Belongs to the XseA family. Heterooligomer composed of large and small subunits.

The protein resides in the cytoplasm. The enzyme catalyses Exonucleolytic cleavage in either 5'- to 3'- or 3'- to 5'-direction to yield nucleoside 5'-phosphates.. Its function is as follows. Bidirectionally degrades single-stranded DNA into large acid-insoluble oligonucleotides, which are then degraded further into small acid-soluble oligonucleotides. The protein is Exodeoxyribonuclease 7 large subunit of Nitrosomonas eutropha (strain DSM 101675 / C91 / Nm57).